The sequence spans 307 residues: Membrane protein insertase YidC 2 (307 aa).

Residues 1–23 (MKLTLNRILFSGLALSILFTLTG) form the signal peptide. Cys-24 is lipidated: N-palmitoyl cysteine. The S-diacylglycerol cysteine moiety is linked to residue Cys-24. 5 helical membrane passes run 58–78 (LGYGLAIIIVTIIVRTLILPL), 135–155 (LGGIGCLPLLIQMPFFSAMYF), 179–199 (VLTAIIAALYFFQSWLSMMAV), 209–225 (TMMYTMPIMMIFMSFSL), and 231–251 (LYWLVGGFFSIIQQLITTYLL). Residues 263-307 (YAKTPPKAYQSTSSRKDVTPSQNMEQANLPKKIKSNRNAGKQRKR) form a disordered region. Residues 271 to 288 (YQSTSSRKDVTPSQNMEQ) show a composition bias toward polar residues. The span at 293–307 (KKIKSNRNAGKQRKR) shows a compositional bias: basic residues.

The protein belongs to the OXA1/ALB3/YidC family. Type 2 subfamily.

It is found in the cell membrane. Functionally, required for the insertion and/or proper folding and/or complex formation of integral membrane proteins into the membrane. Involved in integration of membrane proteins that insert both dependently and independently of the Sec translocase complex, as well as at least some lipoproteins. The chain is Membrane protein insertase YidC 2 from Streptococcus pyogenes serotype M18 (strain MGAS8232).